The following is a 1213-amino-acid chain: Filamin-A-interacting protein 1 (1213 aa).

Residues 1–70 (MRSRNQGGES…TSGECERKTK (70 aa)) form a disordered region. The span at 61 to 70 (TSGECERKTK) shows a compositional bias: basic and acidic residues. Phosphoserine is present on Ser-138. Coiled-coil stretches lie at residues 192–591 (DYMN…ELSC) and 624–781 (PEDN…LSKR). 2 disordered regions span residues 878–900 (NGPSITQEKGPRTNSSPGHPGEV) and 949–976 (KPRITIIPSPNVMPQKQKSGDTTLGPER). Composition is skewed to polar residues over residues 880 to 894 (PSITQEKGPRTNSSP) and 960 to 970 (VMPQKQKSGDT). At Ser-979 the chain carries Phosphoserine. A disordered region spans residues 1103-1213 (VSTGTVLRSP…STTSLGGGKG (111 aa)). Low complexity predominate over residues 1125 to 1138 (VTSTITITPVTTSS). The segment covering 1139–1156 (ARGTQSVSGQDGSSQRPT) has biased composition (polar residues). Residues 1168–1179 (AGKPVVAAPGAG) show a composition bias toward low complexity.

This sequence belongs to the FILIP1 family. As to quaternary structure, interacts with FLNA. Interacts with RHOD (in GTP-bound form). In terms of tissue distribution, moderately expressed in adult heart and brain. Weakly expressed in lung, skeletal muscle, ovary, testis, kidney, and fetal brain, and hardly detectable in liver, pancreas, spleen, and fetal liver. Within brain, moderate expression is found in amygdala and caudate nucleus. Expressed in skin fibroblasts.

Its subcellular location is the cytoplasm. It is found in the cytoskeleton. Functionally, by acting through a filamin-A/F-actin axis, it controls the start of neocortical cell migration from the ventricular zone. May be able to induce the degradation of filamin-A. The sequence is that of Filamin-A-interacting protein 1 (FILIP1) from Homo sapiens (Human).